The primary structure comprises 778 residues: Pentatricopeptide repeat-containing protein At3g09650, chloroplastic (778 aa).

The transit peptide at 1–65 (MNILRPPTSS…RSASGTANSS (65 aa)) directs the protein to the chloroplast. 3 PPR repeats span residues 235 to 269 (DTAAFNAVLNACANLGDTDKYWKLFEEMSEWDCEP), 270 to 304 (DVLTYNVMIKLCARVGRKELIVFVLERIIDKGIKV), and 305 to 339 (CMTTMHSLVAAYVGFGDLRTAERIVQAMREKRRDL). The interval 351 to 381 (LKEKEEEEAEDDEDAFEDDEDSGYSARDEVS) is disordered. Residues 355–372 (EEEEAEDDEDAFEDDEDS) are compositionally biased toward acidic residues. PPR repeat units lie at residues 413 to 443 (DSRIYTTLMKGYMKNGRVADTARMLEAMRRQ), 451 to 485 (DEVTYTTVVSAFVNAGLMDRARQVLAEMARMGVPA), 486 to 521 (NRITYNVLLKGYCKQLQIDRAEDLLREMTEDAGIEP), 522 to 556 (DVVSYNIIIDGCILIDDSAGALAFFNEMRTRGIAP), 557 to 587 (TKISYTTLMKAFAMSGQPKLANRVFDEMMND), 593 to 627 (DLIAWNMLVEGYCRLGLIEDAQRVVSRMKENGFYP), and 628 to 658 (NVATYGSLANGVSQARKPGDALLLWKEIKER).

Belongs to the PPR family. P subfamily.

Its subcellular location is the plastid. It localises to the chloroplast stroma. In terms of biological role, involved in the processing of polycistronic chloroplast psbB-psbT-psbH-petB-petD transcript. Could bind RNA. In Arabidopsis thaliana (Mouse-ear cress), this protein is Pentatricopeptide repeat-containing protein At3g09650, chloroplastic (HCF152).